Reading from the N-terminus, the 242-residue chain is C-reactive protein 3.3 (242 aa).

An N-terminal signal peptide occupies residues 1–24 (MKTFHGPTCGTAVSLCLLLFLTSA). The Pentraxin (PTX) domain occupies 30-241 (ITSKVKFPPS…GVVLSPNEIC (212 aa)). Positions 60 and 63 each coordinate phosphocholine. Disulfide bonds link cysteine 62/cysteine 125 and cysteine 112/cysteine 144. Positions 85 and 86 each coordinate Ca(2+). N-linked (GlcNAc...) asparagine glycosylation is present at asparagine 147. Residues glutamine 169, aspartate 170, and glutamine 180 each contribute to the Ca(2+) site. Cysteines 207 and 241 form a disulfide.

Belongs to the pentraxin family. As to quaternary structure, homopentamer. Pentraxin (or pentaxin) have a discoid arrangement of 5 non-covalently bound subunits. Ca(2+) serves as cofactor.

It localises to the secreted. In terms of biological role, might serve the role of immunoglobulins. The protein is C-reactive protein 3.3 of Limulus polyphemus (Atlantic horseshoe crab).